Here is a 90-residue protein sequence, read N- to C-terminus: Large ribosomal subunit protein uL23c (90 aa).

It belongs to the universal ribosomal protein uL23 family. In terms of assembly, part of the 50S ribosomal subunit.

It localises to the plastid. Its subcellular location is the chloroplast. In terms of biological role, binds to 23S rRNA. In Oltmannsiellopsis viridis (Marine flagellate), this protein is Large ribosomal subunit protein uL23c (rpl23).